The following is a 310-amino-acid chain: Alpha/beta hydrolase domain-containing protein 17A (310 aa).

Catalysis depends on charge relay system residues S190, D255, and H284. S307 bears the Phosphoserine mark.

Belongs to the AB hydrolase superfamily. ABHD17 family. Post-translationally, palmitoylated on cysteine residues located in a cysteine cluster at the N-terminus which promotes membrane localization. Palmitoylation is required for post-synaptic localization and for depalmitoylating activity towards DLG4/PSD95.

The protein localises to the cell membrane. It is found in the endosome membrane. Its subcellular location is the cell projection. It localises to the dendritic spine. The protein resides in the postsynaptic density membrane. It catalyses the reaction S-hexadecanoyl-L-cysteinyl-[protein] + H2O = L-cysteinyl-[protein] + hexadecanoate + H(+). Hydrolyzes fatty acids from S-acylated cysteine residues in proteins. Has depalmitoylating activity towards NRAS. Has depalmitoylating activity towards DLG4/PSD95. May have depalmitoylating activity towards MAP6. In Bos taurus (Bovine), this protein is Alpha/beta hydrolase domain-containing protein 17A.